The following is a 216-amino-acid chain: Calcium-binding protein 2 (216 aa).

The segment at 1 to 41 (MGNCAKTPWHRGSKERWQWPGSPLGGSRPSPGPRTEEQEGT) is disordered. Glycine 2 carries N-myristoyl glycine lipidation. Low complexity predominate over residues 20–29 (PGSPLGGSRP). 4 EF-hand domains span residues 74–109 (EEIE…LGYM), 125–142 (GKVD…KLLA), 148–183 (IGVR…LLGE), and 185–216 (LSQR…MMSR). Ca(2+) contacts are provided by aspartate 87, aspartate 89, aspartate 91, tyrosine 93, and glutamate 98. 9 residues coordinate Ca(2+): aspartate 161, asparagine 163, aspartate 165, cysteine 167, glutamate 172, aspartate 198, asparagine 200, aspartate 202, and glutamate 209.

As to expression, expressed in the inner hair cells (IHCs), outer hair cells,(OHCs) and vestibular hair cells within the ear and in the retina (at protein level). Expressed in the retinal cone type 6 ON-bipolar cells and type 1 OFF-bipolar cells (at protein level). Expressed in the organ of Corti and spiral ganglion neurons in the cochlea (at protein level).

It localises to the cytoplasm. The protein resides in the perinuclear region. It is found in the cell membrane. Its subcellular location is the golgi apparatus. Its function is as follows. Required for sound encoding at inner hair cells (IHCs) synapses, likely via inhibition of the inactivation of voltage-gated calcium channel of type 1.3 (Cav1.3) in the IHCs. Required for the normal transfer of light signals through the retina. The sequence is that of Calcium-binding protein 2 (Cabp2) from Mus musculus (Mouse).